The sequence spans 244 residues: Phosphoadenosine 5'-phosphosulfate reductase (244 aa).

Cys239 (nucleophile; cysteine thiosulfonate intermediate) is an active-site residue.

The protein belongs to the PAPS reductase family. CysH subfamily.

It is found in the cytoplasm. The enzyme catalyses [thioredoxin]-disulfide + sulfite + adenosine 3',5'-bisphosphate + 2 H(+) = [thioredoxin]-dithiol + 3'-phosphoadenylyl sulfate. It participates in sulfur metabolism; hydrogen sulfide biosynthesis; sulfite from sulfate: step 3/3. Its function is as follows. Catalyzes the formation of sulfite from phosphoadenosine 5'-phosphosulfate (PAPS) using thioredoxin as an electron donor. This Salmonella typhi protein is Phosphoadenosine 5'-phosphosulfate reductase.